The chain runs to 432 residues: Glutamyl-tRNA reductase (432 aa).

Substrate-binding positions include 55–58, Ser-114, 119–121, and Gln-125; these read TCNR and ETQ. Cys-56 functions as the Nucleophile in the catalytic mechanism. Residue 194 to 199 participates in NADP(+) binding; it reads GAGEMI.

The protein belongs to the glutamyl-tRNA reductase family. Homodimer.

It carries out the reaction (S)-4-amino-5-oxopentanoate + tRNA(Glu) + NADP(+) = L-glutamyl-tRNA(Glu) + NADPH + H(+). It participates in porphyrin-containing compound metabolism; protoporphyrin-IX biosynthesis; 5-aminolevulinate from L-glutamyl-tRNA(Glu): step 1/2. In terms of biological role, catalyzes the NADPH-dependent reduction of glutamyl-tRNA(Glu) to glutamate 1-semialdehyde (GSA). In Burkholderia ambifaria (strain ATCC BAA-244 / DSM 16087 / CCUG 44356 / LMG 19182 / AMMD) (Burkholderia cepacia (strain AMMD)), this protein is Glutamyl-tRNA reductase.